Here is a 420-residue protein sequence, read N- to C-terminus: Exodeoxyribonuclease 7 large subunit (420 aa).

It belongs to the XseA family. As to quaternary structure, heterooligomer composed of large and small subunits.

The protein resides in the cytoplasm. It carries out the reaction Exonucleolytic cleavage in either 5'- to 3'- or 3'- to 5'-direction to yield nucleoside 5'-phosphates.. Functionally, bidirectionally degrades single-stranded DNA into large acid-insoluble oligonucleotides, which are then degraded further into small acid-soluble oligonucleotides. This Helicobacter acinonychis (strain Sheeba) protein is Exodeoxyribonuclease 7 large subunit.